The following is a 490-amino-acid chain: Betaine aldehyde dehydrogenase (490 aa).

Thr-26, Ile-27, and Asp-93 together coordinate K(+). Position 150 to 152 (150 to 152 (GAW)) interacts with NAD(+). The active-site Charge relay system is the Lys-162. Position 176-179 (176-179 (KPSE)) interacts with NAD(+). Residue Val-180 participates in K(+) binding. NAD(+) is bound at residue 230-233 (GVAS). Leu-246 provides a ligand contact to K(+). Catalysis depends on Glu-252, which acts as the Proton acceptor. Positions 254, 286, and 387 each coordinate NAD(+). The active-site Nucleophile is Cys-286. Cysteine sulfenic acid (-SOH) is present on Cys-286. Residues Lys-457 and Gly-460 each coordinate K(+). Glu-464 functions as the Charge relay system in the catalytic mechanism.

It belongs to the aldehyde dehydrogenase family. In terms of assembly, dimer of dimers. K(+) is required as a cofactor.

It carries out the reaction betaine aldehyde + NAD(+) + H2O = glycine betaine + NADH + 2 H(+). It functions in the pathway amine and polyamine biosynthesis; betaine biosynthesis via choline pathway; betaine from betaine aldehyde: step 1/1. Functionally, involved in the biosynthesis of the osmoprotectant glycine betaine. Catalyzes the irreversible oxidation of betaine aldehyde to the corresponding acid. This is Betaine aldehyde dehydrogenase from Escherichia coli O157:H7.